Here is a 95-residue protein sequence, read N- to C-terminus: Co-chaperonin GroES (95 aa).

Belongs to the GroES chaperonin family. Heptamer of 7 subunits arranged in a ring. Interacts with the chaperonin GroEL.

Its subcellular location is the cytoplasm. Together with the chaperonin GroEL, plays an essential role in assisting protein folding. The GroEL-GroES system forms a nano-cage that allows encapsulation of the non-native substrate proteins and provides a physical environment optimized to promote and accelerate protein folding. GroES binds to the apical surface of the GroEL ring, thereby capping the opening of the GroEL channel. In Francisella tularensis subsp. tularensis (strain FSC 198), this protein is Co-chaperonin GroES.